A 21-amino-acid chain; its full sequence is Testis ecdysiotropin peptide 1 (21 aa).

The tract at residues 1–21 (ISDFDEYEPLNDADNNEVLDF) is disordered.

In terms of biological role, start or boost ecdysteroid synthesis in testis of larvae and pupae. In Lymantria dispar (Gypsy moth), this protein is Testis ecdysiotropin peptide 1.